The sequence spans 64 residues: Conotoxin Vc1.3 (64 aa).

Positions 1-21 (MGMRMMFTVFLLVVLATTVVS) are cleaved as a signal peptide. A propeptide spanning residues 22–43 (FTSDRASDGRKAAASDLITLTI) is cleaved from the precursor. 2 cysteine pairs are disulfide-bonded: C46–C52 and C47–C60. Residue C60 is modified to Cysteine amide.

Belongs to the conotoxin A superfamily. In terms of tissue distribution, expressed by the venom duct.

It localises to the secreted. May act as a toxin. The sequence is that of Conotoxin Vc1.3 from Conus victoriae (Queen Victoria cone).